Here is a 728-residue protein sequence, read N- to C-terminus: Dehydrocurvularin biosynthesis regulator (728 aa).

Residues 28 to 58 (CWECKRRKMKCRFDPRIASACNGCRRRGSPC) constitute a DNA-binding region (zn(2)-C6 fungal-type). 2 disordered regions span residues 75–130 (GTTS…TSQR) and 606–626 (QHATTASKPPVDRSPSSNSDA). Over residues 89 to 109 (RATTPSERTDQILTPVSTVRE) the composition is skewed to polar residues.

It localises to the nucleus. Transcription factor involved in regulation of the dehydrocurvularin biosynthesis gene cluster. The chain is Dehydrocurvularin biosynthesis regulator from Aspergillus terreus.